A 346-amino-acid polypeptide reads, in one-letter code: MQYHRIPHSSLEVSTLGLGTMTFGEQNSEADAHAQLDYAVAQGINLIDVAEMYPVPPRPETQGLTETYVGNWLAKHGSREKLIIASKVSGPSRNNDKGIRPDQALDRKNIREALHDSLKRLQTDYLDLYQVHWPQRPTNCFGKLGYSWTDSAPAVSLLDTLDALAEYQRAGKIRYIGVSNETAFGVMRYLHLADKHDLPRIVTIQNPYSLLNRSFEVGLAEVSQYEGVELLAYSCLGFGTLTGKYLNGAKPAGARNTLFSRFTRYSGEQTQKAVAAYVDIARRHGLDPAQMALAFVRRQPFVASTLLGATTMDQLKTNIESLHLELSEDVLAEIEAVHQVYTYPAP.

The active-site Proton donor is the Y53. Residue 234–244 (SCLGFGTLTGK) coordinates NADP(+).

This sequence belongs to the aldo/keto reductase family. Aldo/keto reductase 2 subfamily.

The sequence is that of Protein tas (tas) from Escherichia coli (strain K12).